Consider the following 223-residue polypeptide: Pre-mRNA-splicing factor SPF27 (223 aa).

Residues 139–223 are a coiled coil; that stretch reads NENLLHMIDC…GENKENIEDY (85 aa).

It belongs to the SPF27 family. As to quaternary structure, component of the pre-catalytic and catalytic spliceosome complexes. Component of the postcatalytic spliceosome P complex.

It localises to the nucleus. Its function is as follows. Required for pre-mRNA splicing as component of the activated spliceosome. May have a scaffolding role in the spliceosome assembly as it contacts all other components of the core complex. The protein is Pre-mRNA-splicing factor SPF27 (bcas2) of Xenopus tropicalis (Western clawed frog).